Here is a 55-residue protein sequence, read N- to C-terminus: uncharacterized protein (55 aa).

This is an uncharacterized protein from Escherichia coli (strain K12).